The chain runs to 301 residues: Rhodopsin (301 aa).

Over 1–18 (LHMIHLHWYQYPPMNPIM) the chain is Extracellular. The helical transmembrane segment at 19-43 (YPLLLVFMLITGILCLAGNFVTIWV) threads the bilayer. Over 44–55 (FMNTKSLRTPAN) the chain is Cytoplasmic. A helical membrane pass occupies residues 56–78 (LLVVNLAMSDFLMMFTMFPPMMI). At 79–92 (TCYYHTWTLGATFC) the chain is on the extracellular side. C92 and C169 form a disulfide bridge. A helical membrane pass occupies residues 93–115 (QVYAFLGNLCGCASIWTMVFITF). Residues 116 to 118 (DRY) carry the 'Ionic lock' involved in activated form stabilization motif. Topologically, residues 116–134 (DRYNVIVKGVAGEPLSTKK) are cytoplasmic. Residues 135-155 (ATLWILTIWILSTTWCVAPFF) form a helical membrane-spanning segment. Topologically, residues 156–182 (GWNRYVPEGNLTGCGTDYLSQDILSRS) are extracellular. N-linked (GlcNAc...) asparagine glycosylation occurs at N165. A helical membrane pass occupies residues 183–204 (YLYIYSTWVYFLPLAITIYCYV). Over 205–245 (VIIKAVAAHEKGMRDQAKKMGIKSLRNEEAQKTSAECRLAK) the chain is Cytoplasmic. The chain crosses the membrane as a helical span at residues 246–267 (IAMTTVALWFIAWTPYLLINWV). Residues 268 to 278 (GMFARSYLSPV) are Extracellular-facing. A helical transmembrane segment spans residues 279 to 300 (YTIWGYVFAKANAVYNPIVYAI). K288 is modified (N6-(retinylidene)lysine).

It belongs to the G-protein coupled receptor 1 family. Opsin subfamily. As to quaternary structure, homodimer. Interacts with GNAQ. Post-translationally, contains one covalently linked retinal chromophore.

It localises to the cell projection. Its subcellular location is the rhabdomere membrane. Functionally, photoreceptor required for image-forming vision at low light intensity. Can use both retinal and 3-dehydroretinal as visual pigment. Light-induced isomerization of 11-cis to all-trans retinal triggers a conformational change that activates signaling via G-proteins. Signaling via GNAQ probably mediates the activation of phospholipase C. This chain is Rhodopsin (RHO), found in Orconectes australis (Southern cave crayfish).